Reading from the N-terminus, the 613-residue chain is Laccase 1 (613 aa).

An N-terminal signal peptide occupies residues 1 to 20 (MSSSVRLLLIVALLYTNSWA). 3 consecutive Plastocyanin-like domains span residues 29–142 (ITWE…IRPK), 171–359 (YLVV…MRVP), and 468–598 (DATC…ILDG). A glycan (N-linked (GlcNAc...) asparagine) is linked at Asn74. Positions 78, 80, 122, and 124 each coordinate Cu cation. N-linked (GlcNAc...) asparagine glycosylation is found at Asn256, Asn279, and Asn484. Residues His506, His509, and His511 each coordinate Cu cation. Residue Asn526 is glycosylated (N-linked (GlcNAc...) asparagine). Cu cation-binding residues include His580, Cys581, His582, and His586.

The protein belongs to the multicopper oxidase family. Cu cation serves as cofactor.

The protein resides in the cell surface. Its pathway is pigment biosynthesis. In terms of biological role, laccase; part of the Pks1 gene cluster that mediates the biosynthesis of an anthraquinone derivative pigment that contributes to conidial pigmentation that provides protection from UV radiation, heat and cold stress. The polyketide synthase Pks1 produces 1-acetyl-2,4,6,8-tetrahydroxy-9,10-anthraquinone though condensation of acetyl-CoA with malonyl-CoA. The dehydratase EthD and the laccase Mlac1 further convert the anthraquinone derivative into the final conidial pigment. This is Laccase 1 from Metarhizium acridum (strain CQMa 102).